Reading from the N-terminus, the 260-residue chain is WUSCHEL-related homeobox 2 (260 aa).

The homeobox; WUS-type DNA-binding region spans 10–74; it reads ASSSRWNPTK…NHKARQRQKQ (65 aa).

This sequence belongs to the WUS homeobox family.

The protein localises to the nucleus. Probable transcription factor involved in embryonic patterning. Required for apical embryo development after fertilization. Its specific localization to the apical daughter cell of the zygote, while WOX8 is confined to the basal cell, suggests that the asymmetric division of the plant zygote separates determinants of apical and basal cell fates. In Arabidopsis thaliana (Mouse-ear cress), this protein is WUSCHEL-related homeobox 2 (WOX2).